The chain runs to 517 residues: Maturase K (517 aa).

It belongs to the intron maturase 2 family. MatK subfamily.

It is found in the plastid. The protein resides in the chloroplast. Its function is as follows. Usually encoded in the trnK tRNA gene intron. Probably assists in splicing its own and other chloroplast group II introns. The protein is Maturase K of Trillium grandiflorum (Large-flowered trillium).